Consider the following 421-residue polypeptide: Serine--tRNA ligase (421 aa).

Residue 229–231 (TAE) participates in L-serine binding. An ATP-binding site is contributed by 260 to 262 (RAE). E283 is an L-serine binding site. 347–350 (EISS) provides a ligand contact to ATP. S383 lines the L-serine pocket.

It belongs to the class-II aminoacyl-tRNA synthetase family. Type-1 seryl-tRNA synthetase subfamily. Homodimer. The tRNA molecule binds across the dimer.

The protein resides in the cytoplasm. The catalysed reaction is tRNA(Ser) + L-serine + ATP = L-seryl-tRNA(Ser) + AMP + diphosphate + H(+). It catalyses the reaction tRNA(Sec) + L-serine + ATP = L-seryl-tRNA(Sec) + AMP + diphosphate + H(+). The protein operates within aminoacyl-tRNA biosynthesis; selenocysteinyl-tRNA(Sec) biosynthesis; L-seryl-tRNA(Sec) from L-serine and tRNA(Sec): step 1/1. In terms of biological role, catalyzes the attachment of serine to tRNA(Ser). Is also able to aminoacylate tRNA(Sec) with serine, to form the misacylated tRNA L-seryl-tRNA(Sec), which will be further converted into selenocysteinyl-tRNA(Sec). This chain is Serine--tRNA ligase, found in Desulfitobacterium hafniense (strain DSM 10664 / DCB-2).